The following is a 128-amino-acid chain: uncharacterized protein (128 aa).

2 disordered regions span residues 62–83 (LNPS…SPRV) and 101–128 (FAAS…RYQP). Residues 101-114 (FAASSSSTAPVTVT) show a composition bias toward low complexity.

Its subcellular location is the cytoplasm. It is found in the nucleus. This is an uncharacterized protein from Saccharomyces cerevisiae (strain ATCC 204508 / S288c) (Baker's yeast).